Here is a 556-residue protein sequence, read N- to C-terminus: Arginine--tRNA ligase (556 aa).

The 'HIGH' region signature appears at 132–142 (ANPTGDLHLGH).

The protein belongs to the class-I aminoacyl-tRNA synthetase family. Monomer.

The protein localises to the cytoplasm. The enzyme catalyses tRNA(Arg) + L-arginine + ATP = L-arginyl-tRNA(Arg) + AMP + diphosphate. The sequence is that of Arginine--tRNA ligase from Bacillus cereus (strain ATCC 10987 / NRS 248).